Here is a 212-residue protein sequence, read N- to C-terminus: F-box protein GID2 (212 aa).

The segment at Met1–Pro74 is disordered. A compositionally biased stretch (low complexity) spans Asp35–Glu59. The F-box domain occupies Gln70 to Ala116.

Part of some SCF(GID2) complex, which consist of a SKP1 protein, CUL1, GID2 and some RING box protein. Interacts directly with SKP2 and SKP15. Interacts directly with DELLA protein SLR1. May have a higher affinity for phosphorylated SLR1 proteins. Widely expressed. Preferentially expressed in unopened flowers, shoot apices and elongation stem. Expressed at lower level in the leaf blades, leaf sheaths, roots and rachis.

The protein resides in the nucleus. It functions in the pathway protein modification; protein ubiquitination. Essential component of some SCF-type E3 ligase complex that positively regulates the gibberellin signaling pathway. Upon gibberellin treatment, the complex mediates the ubiquitination and subsequent degradation of DELLA protein SLR1, a repressor of the gibberellin pathway, leading to activate the pathway. The polypeptide is F-box protein GID2 (GID2) (Oryza sativa subsp. japonica (Rice)).